A 1176-amino-acid polypeptide reads, in one-letter code: DNA-directed RNA polymerase subunit beta (1176 aa).

Positions 13–30 (TDASLHQGRPQSSSNSSV) are enriched in polar residues. A disordered region spans residues 13 to 35 (TDASLHQGRPQSSSNSSVPGAPN).

The protein belongs to the RNA polymerase beta chain family. As to quaternary structure, the RNAP catalytic core consists of 2 alpha, 1 beta, 1 beta' and 1 omega subunit. When a sigma factor is associated with the core the holoenzyme is formed, which can initiate transcription.

The catalysed reaction is RNA(n) + a ribonucleoside 5'-triphosphate = RNA(n+1) + diphosphate. Functionally, DNA-dependent RNA polymerase catalyzes the transcription of DNA into RNA using the four ribonucleoside triphosphates as substrates. The sequence is that of DNA-directed RNA polymerase subunit beta from Mycobacterium ulcerans (strain Agy99).